Here is a 358-residue protein sequence, read N- to C-terminus: UDP-N-acetylglucosamine--N-acetylmuramyl-(pentapeptide) pyrophosphoryl-undecaprenol N-acetylglucosamine transferase (358 aa).

3 residues coordinate UDP-N-acetyl-alpha-D-glucosamine: Arg166, Ser196, and Gln291.

It belongs to the glycosyltransferase 28 family. MurG subfamily.

It localises to the cell membrane. It carries out the reaction Mur2Ac(oyl-L-Ala-gamma-D-Glu-L-Lys-D-Ala-D-Ala)-di-trans,octa-cis-undecaprenyl diphosphate + UDP-N-acetyl-alpha-D-glucosamine = beta-D-GlcNAc-(1-&gt;4)-Mur2Ac(oyl-L-Ala-gamma-D-Glu-L-Lys-D-Ala-D-Ala)-di-trans,octa-cis-undecaprenyl diphosphate + UDP + H(+). Its pathway is cell wall biogenesis; peptidoglycan biosynthesis. In terms of biological role, cell wall formation. Catalyzes the transfer of a GlcNAc subunit on undecaprenyl-pyrophosphoryl-MurNAc-pentapeptide (lipid intermediate I) to form undecaprenyl-pyrophosphoryl-MurNAc-(pentapeptide)GlcNAc (lipid intermediate II). This Staphylococcus saprophyticus subsp. saprophyticus (strain ATCC 15305 / DSM 20229 / NCIMB 8711 / NCTC 7292 / S-41) protein is UDP-N-acetylglucosamine--N-acetylmuramyl-(pentapeptide) pyrophosphoryl-undecaprenol N-acetylglucosamine transferase.